Here is a 382-residue protein sequence, read N- to C-terminus: MKKLFTSESVGRGHPDKICDQISDAILDAYLTWDPHSKVAVETMVSGNNVFIAGEVKSKVTVDVIEIAKNVLRNIGYYSNNTSFITDIKSQSENIAMGVNLQDSDDLGAGDQGFMFGYATNETSQYMPLGITLCNKIVSRAGMLIKNQEFKDAKEDMKTQVTLDYSDPQNVKVDTIIFSCHHNEKYNETKFKNYIKTQILKPVLDEFNLELPERILINPTGKFVIGGPFSDTGLTGRKIIVDTYGGSARHGGGAFSGKDATKLDRSGAYMARWIAKNLVAANIADKIEVQIAYSIGVAKPVSVMVNTFGENKVPEDVVLDAILNNFELTPKGIIKSLNLNKPIYQKSSVYGHFGREDFQFTWESLDKVEAIREFVISKGFNI.

Histidine 14 lines the ATP pocket. A Mg(2+)-binding site is contributed by aspartate 16. Residue glutamate 42 coordinates K(+). L-methionine contacts are provided by glutamate 55 and glutamine 91. Residues 91–101 (QSENIAMGVNL) are flexible loop. ATP-binding positions include 156–158 (DMK), 222–223 (KF), aspartate 231, 237–238 (RK), alanine 254, and lysine 258. Aspartate 231 contributes to the L-methionine binding site. Lysine 262 lines the L-methionine pocket.

It belongs to the AdoMet synthase family. In terms of assembly, homotetramer; dimer of dimers. Mg(2+) serves as cofactor. K(+) is required as a cofactor.

The protein resides in the cytoplasm. The catalysed reaction is L-methionine + ATP + H2O = S-adenosyl-L-methionine + phosphate + diphosphate. Its pathway is amino-acid biosynthesis; S-adenosyl-L-methionine biosynthesis; S-adenosyl-L-methionine from L-methionine: step 1/1. In terms of biological role, catalyzes the formation of S-adenosylmethionine (AdoMet) from methionine and ATP. The overall synthetic reaction is composed of two sequential steps, AdoMet formation and the subsequent tripolyphosphate hydrolysis which occurs prior to release of AdoMet from the enzyme. The sequence is that of S-adenosylmethionine synthase from Mycoplasmopsis synoviae (strain 53) (Mycoplasma synoviae).